Here is a 404-residue protein sequence, read N- to C-terminus: MAIHNCEGENVSTENKAVYMDNSATTPVRKEVVEAMLPYMTENFGNPSSIYEIGKTSKHAINLARKKAADALGAEENEIYFTSGGTESDNWAIKGIAFANRDKGKHIITSSIEHHAVLHTCAWLEGQGFEVTYLPVDKYGMVSPDELRNAIRDDTILISIMFANNEIGTIQPIKEIGEIAKENQIYFHTDAVQAIGHVPIDVKKLNIDLLSLSGHEFEGPKGCGALYIRKGVKIDPLLHGGAQERKRRAGTENVPGIVGLGKATELATAEIEESNRTLLKLRDRLIEGLLKIPKTHLNGHPTQRLANNVNVTFEYIEGESLLLLLNAKGIYASTGSACNSSSLEPSHVLTACGVPHEIIHGSLRLSLGRMNTSEDVDRVLEVVPEIVQKLRNMSPLTPKEYRTL.

Residues glycine 85 to threonine 86, asparagine 165, glutamine 193, serine 213 to histidine 215, and threonine 251 contribute to the pyridoxal 5'-phosphate site. Cysteine 338 acts as the Cysteine persulfide intermediate in catalysis. Residue cysteine 338 coordinates [2Fe-2S] cluster.

The protein belongs to the class-V pyridoxal-phosphate-dependent aminotransferase family. NifS/IscS subfamily. In terms of assembly, homodimer. Forms a heterotetramer with IscU, interacts with other sulfur acceptors. It depends on pyridoxal 5'-phosphate as a cofactor.

The protein localises to the cytoplasm. It carries out the reaction (sulfur carrier)-H + L-cysteine = (sulfur carrier)-SH + L-alanine. Its pathway is cofactor biosynthesis; iron-sulfur cluster biosynthesis. Master enzyme that delivers sulfur to a number of partners involved in Fe-S cluster assembly, tRNA modification or cofactor biosynthesis. Catalyzes the removal of elemental sulfur atoms from cysteine to produce alanine. Functions as a sulfur delivery protein for Fe-S cluster synthesis onto IscU, an Fe-S scaffold assembly protein, as well as other S acceptor proteins. The polypeptide is Cysteine desulfurase IscS (Methanosarcina thermophila).